Consider the following 217-residue polypeptide: ATP phosphoribosyltransferase (217 aa).

This sequence belongs to the ATP phosphoribosyltransferase family. Short subfamily. Heteromultimer composed of HisG and HisZ subunits.

It is found in the cytoplasm. It catalyses the reaction 1-(5-phospho-beta-D-ribosyl)-ATP + diphosphate = 5-phospho-alpha-D-ribose 1-diphosphate + ATP. Its pathway is amino-acid biosynthesis; L-histidine biosynthesis; L-histidine from 5-phospho-alpha-D-ribose 1-diphosphate: step 1/9. Catalyzes the condensation of ATP and 5-phosphoribose 1-diphosphate to form N'-(5'-phosphoribosyl)-ATP (PR-ATP). Has a crucial role in the pathway because the rate of histidine biosynthesis seems to be controlled primarily by regulation of HisG enzymatic activity. The polypeptide is ATP phosphoribosyltransferase (Polaromonas naphthalenivorans (strain CJ2)).